Reading from the N-terminus, the 32-residue chain is Photosystem II reaction center protein Z (32 aa).

The chain crosses the membrane as a helical span at residues 12–32 (IGSAAWAGLVLLVGTLNYLVI).

The protein belongs to the PsbZ family. In terms of assembly, PSII is composed of 1 copy each of membrane proteins PsbA, PsbB, PsbC, PsbD, PsbE, PsbF, PsbH, PsbI, PsbJ, PsbK, PsbL, PsbM, PsbT, PsbY, PsbZ, Psb30/Ycf12, at least 3 peripheral proteins of the oxygen-evolving complex and a large number of cofactors. It forms dimeric complexes.

It is found in the plastid. Its subcellular location is the chloroplast thylakoid membrane. Functionally, may control the interaction of photosystem II (PSII) cores with the light-harvesting antenna, regulates electron flow through the 2 photosystem reaction centers. PSII is a light-driven water plastoquinone oxidoreductase, using light energy to abstract electrons from H(2)O, generating a proton gradient subsequently used for ATP formation. This chain is Photosystem II reaction center protein Z, found in Euglena anabaena (Euglenaria anabaena).